Reading from the N-terminus, the 438-residue chain is tRNA modification GTPase MnmE (438 aa).

Residues Arg20, Glu78, and Lys117 each contribute to the (6S)-5-formyl-5,6,7,8-tetrahydrofolate site. Residues 214-359 (GIRVLIIGKP…LIDEIKKLFY (146 aa)) enclose the TrmE-type G domain. Asn224 serves as a coordination point for K(+). Residues 224 to 229 (NVGKST), 243 to 249 (TDIPGTT), and 268 to 271 (DTAG) contribute to the GTP site. Ser228 contributes to the Mg(2+) binding site. The K(+) site is built by Thr243, Ile245, and Thr248. Thr249 contributes to the Mg(2+) binding site. Lys438 lines the (6S)-5-formyl-5,6,7,8-tetrahydrofolate pocket.

It belongs to the TRAFAC class TrmE-Era-EngA-EngB-Septin-like GTPase superfamily. TrmE GTPase family. As to quaternary structure, homodimer. Heterotetramer of two MnmE and two MnmG subunits. K(+) serves as cofactor.

It is found in the cytoplasm. Exhibits a very high intrinsic GTPase hydrolysis rate. Involved in the addition of a carboxymethylaminomethyl (cmnm) group at the wobble position (U34) of certain tRNAs, forming tRNA-cmnm(5)s(2)U34. In Ureaplasma parvum serovar 3 (strain ATCC 27815 / 27 / NCTC 11736), this protein is tRNA modification GTPase MnmE.